We begin with the raw amino-acid sequence, 473 residues long: Mogroside IIIx synthase (473 aa).

Residue His-43 is the Proton acceptor of the active site. Catalysis depends on Asp-142, which acts as the Charge relay. UDP-alpha-D-glucose-binding residues include Ser-293, Gln-356, Trp-374, Asn-375, Ser-376, Glu-379, Asp-395, and Gln-396.

Belongs to the UDP-glycosyltransferase family. In terms of tissue distribution, highly expressed in mature fruits.

The enzyme catalyses mogroside IIE + UDP-alpha-D-glucose = mogroside IIIX + UDP + H(+). It catalyses the reaction mogroside III + UDP-alpha-D-glucose = mogroside IV + UDP + H(+). It carries out the reaction mogroside III + UDP-alpha-D-glucose = siamenoside I + UDP + H(+). The catalysed reaction is mogroside IIIX + UDP-alpha-D-glucose = mogroside IVA + UDP + H(+). The enzyme catalyses mogroside IIIX + UDP-alpha-D-glucose = siamenoside I + UDP + H(+). It catalyses the reaction mogroside IV + UDP-alpha-D-glucose = mogroside V + UDP + H(+). It carries out the reaction siamenoside I + UDP-alpha-D-glucose = mogroside V + UDP + H(+). The catalysed reaction is mogroside V + UDP-alpha-D-glucose = mogroside VI + UDP + H(+). It participates in secondary metabolite biosynthesis; terpenoid biosynthesis. Activity is increased by Mg(2+). Its function is as follows. UDP-glycosyltransferase involved in the biosynthesis of cucurbitacin and mogroside tetracyclic triterpene natural products (e.g. siamenoside I and mogrosides IV, V and VI). Cucurbitacins have cytotoxic properties and exhibit deterrent taste as a defense barrier against herbivores. Mogrosides are nonsugar highly oxygenated compounds used as high-intensity zero-calorie sweeteners; they also possess pharmacological properties such as regulating immunity, lowering blood sugar and lipid levels, protecting the liver, and acting as antioxidants and antitumor agents. Catalyzes the branched glucosylations of mogroside II-E, mogroside III, mogroside IIIx, mogroside IV, mogroside IV-A, siamenoside I and mogroside V, ending in the production of mogroside VI. Functionally, catalyzes the beta(1-6) branched glucosylations of mogroside II-E to produce mogroside IIIx by forming a beta(1-6) glycosidic bond with the 6-hydroxyl of glucose 1-C24; a subsequent glycosylation at glucose 1-C3 leads to the formation of mogroside IV-A with beta(1-6) glycosidic bond. Can also use mogroside III-E, mogroside III-A, mogroside IV-E and mogroside IV-A as substrates. The sequence is that of Mogroside IIIx synthase from Siraitia grosvenorii (Monk's fruit).